The following is an 89-amino-acid chain: Small ribosomal subunit protein bS20 (89 aa).

Positions 1–28 are disordered; it reads MTLANIKSAKKRAVQSEKRRQHNASQRS.

It belongs to the bacterial ribosomal protein bS20 family.

Functionally, binds directly to 16S ribosomal RNA. The sequence is that of Small ribosomal subunit protein bS20 from Haemophilus ducreyi (strain 35000HP / ATCC 700724).